The chain runs to 156 residues: Ribonuclease pancreatic (156 aa).

The signal sequence occupies residues 1-28; sequence MALEKSLVLLPLLVLILLVLGWVQPSLG. The segment covering 33-43 has biased composition (basic and acidic residues); that stretch reads AKKFQRQHMDS. A disordered region spans residues 33 to 52; sequence AKKFQRQHMDSDSSPSSNST. 2 residues coordinate substrate: Lys35 and Arg38. His40 functions as the Proton acceptor in the catalytic mechanism. Asn50 and Asn62 each carry an N-linked (GlcNAc...) asparagine glycan. Disulfide bonds link Cys54–Cys112, Cys68–Cys123, Cys86–Cys138, and Cys93–Cys100. Substrate contacts are provided by residues 69 to 73 and Lys94; that span reads KPVNT. Residue Asn104 is glycosylated (N-linked (GlcNAc...) asparagine). Arg113 contacts substrate. Asn116 is a glycosylation site (N-linked (GlcNAc...) asparagine). The active-site Proton donor is His147.

Belongs to the pancreatic ribonuclease family. As to quaternary structure, monomer. Interacts with and forms tight 1:1 complexes with RNH1. Dimerization of two such complexes may occur. Interaction with RNH1 inhibits this protein.

The protein localises to the secreted. The catalysed reaction is an [RNA] containing cytidine + H2O = an [RNA]-3'-cytidine-3'-phosphate + a 5'-hydroxy-ribonucleotide-3'-[RNA].. It carries out the reaction an [RNA] containing uridine + H2O = an [RNA]-3'-uridine-3'-phosphate + a 5'-hydroxy-ribonucleotide-3'-[RNA].. Endonuclease that catalyzes the cleavage of RNA on the 3' side of pyrimidine nucleotides. Acts on single-stranded and double-stranded RNA. This is Ribonuclease pancreatic (RNASE1) from Gorilla gorilla gorilla (Western lowland gorilla).